The following is a 251-amino-acid chain: uncharacterized protein (251 aa).

Residues 4 to 152 (IEITKDNIED…YFQLMALTWN (149 aa)) enclose the N-acetyltransferase domain.

Belongs to the acetyltransferase family.

This is an uncharacterized protein from Bacillus subtilis (strain 168).